A 413-amino-acid chain; its full sequence is Arginine biosynthesis bifunctional protein ArgJ (413 aa).

Thr160, Lys186, Thr197, Glu277, Asn408, and Thr413 together coordinate substrate. The active-site Nucleophile is Thr197.

This sequence belongs to the ArgJ family. Heterotetramer of two alpha and two beta chains.

The protein localises to the cytoplasm. It catalyses the reaction N(2)-acetyl-L-ornithine + L-glutamate = N-acetyl-L-glutamate + L-ornithine. The catalysed reaction is L-glutamate + acetyl-CoA = N-acetyl-L-glutamate + CoA + H(+). It participates in amino-acid biosynthesis; L-arginine biosynthesis; L-ornithine and N-acetyl-L-glutamate from L-glutamate and N(2)-acetyl-L-ornithine (cyclic): step 1/1. The protein operates within amino-acid biosynthesis; L-arginine biosynthesis; N(2)-acetyl-L-ornithine from L-glutamate: step 1/4. Its function is as follows. Catalyzes two activities which are involved in the cyclic version of arginine biosynthesis: the synthesis of N-acetylglutamate from glutamate and acetyl-CoA as the acetyl donor, and of ornithine by transacetylation between N(2)-acetylornithine and glutamate. This chain is Arginine biosynthesis bifunctional protein ArgJ, found in Prochlorococcus marinus (strain SARG / CCMP1375 / SS120).